A 406-amino-acid polypeptide reads, in one-letter code: Elongation factor Tu (406 aa).

Residues 10–215 (KPHVNVGTIG…AIDEYIPTPV (206 aa)) enclose the tr-type G domain. The tract at residues 19–26 (GHVDHGKT) is G1. 19–26 (GHVDHGKT) serves as a coordination point for GTP. Thr26 provides a ligand contact to Mg(2+). The tract at residues 61-65 (GITIN) is G2. Residues 82–85 (DCPG) form a G3 region. GTP-binding positions include 82 to 86 (DCPGH) and 137 to 140 (NKVD). The interval 137 to 140 (NKVD) is G4. The G5 stretch occupies residues 175–177 (SAL).

This sequence belongs to the TRAFAC class translation factor GTPase superfamily. Classic translation factor GTPase family. EF-Tu/EF-1A subfamily. As to quaternary structure, monomer.

The protein localises to the cytoplasm. It catalyses the reaction GTP + H2O = GDP + phosphate + H(+). In terms of biological role, GTP hydrolase that promotes the GTP-dependent binding of aminoacyl-tRNA to the A-site of ribosomes during protein biosynthesis. The protein is Elongation factor Tu of Thermus thermophilus (strain ATCC BAA-163 / DSM 7039 / HB27).